The primary structure comprises 683 residues: U4/U6 small nuclear ribonucleoprotein Prp3 (683 aa).

The 87-residue stretch at 1–87 (MALSKRELDE…HSKSSSDRSR (87 aa)) folds into the PWI domain. Residues 73-107 (GRSSRHSKSSSDRSRKRELKEVFGDDSEISKESSG) show a composition bias toward basic and acidic residues. Positions 73 to 135 (GRSSRHSKSS…IPGPPSESPG (63 aa)) are disordered. A Glycyl lysine isopeptide (Lys-Gly) (interchain with G-Cter in SUMO2) cross-link involves residue Lys-139. The tract at residues 161–183 (SFISPPAPQPKTPSSSQPERLPI) is disordered. Ser-164 carries the post-translational modification Phosphoserine. Glycyl lysine isopeptide (Lys-Gly) (interchain with G-Cter in SUMO2) cross-links involve residues Lys-244 and Lys-252. The segment at 416-550 (NLVEHPAQLN…VHISVYRVRN (135 aa)) is mediates interaction with SART3. Position 619 is a phosphoserine (Ser-619).

In terms of assembly, component of the precatalytic spliceosome (spliceosome B complex). Component of the U4/U6-U5 tri-snRNP complex, a building block of the precatalytic spliceosome (spliceosome B complex). The U4/U6-U5 tri-snRNP complex is composed of the U4, U6 and U5 snRNAs and at least PRPF3, PRPF4, PRPF6, PRPF8, PRPF31, SNRNP200, TXNL4A, SNRNP40, SNRPB, SNRPD1, SNRPD2, SNRPD3, SNRPE, SNRPF, SNRPG, DDX23, CD2BP2, PPIH, SNU13, EFTUD2, SART1 and USP39, plus LSM2, LSM3, LSM4, LSM5, LSM6, LSM7 and LSM8. Interacts directly with PRPF4. Part of a heteromeric complex containing PPIH, PRPF3 and PRPF4 that is stable in the absence of RNA. Interacts with SART3; the interaction is direct and recruits the deubiquitinase USP4 to PRPF3. Interacts with PRPF19. Interacts ('Lys-63'-linked polyubiquitinated) with PRPF8 (via the MPN (JAB/Mov34) domain); may stabilize the U4/U6-U5 tri-snRNP complex. Interacts with ERCC6. Post-translationally, ubiquitinated. Undergoes 'Lys-63'-linked polyubiquitination by PRPF19 and deubiquitination by USP4. 'Lys-63'-linked ubiquitination increases the affinity for PRPF8 and may regulate the assembly of the U4/U6-U5 tri-snRNP complex.

It is found in the nucleus. The protein resides in the nucleus speckle. In terms of biological role, plays a role in pre-mRNA splicing as component of the U4/U6-U5 tri-snRNP complex that is involved in spliceosome assembly, and as component of the precatalytic spliceosome (spliceosome B complex). The polypeptide is U4/U6 small nuclear ribonucleoprotein Prp3 (Prpf3) (Mus musculus (Mouse)).